Here is a 120-residue protein sequence, read N- to C-terminus: UPF0231 protein CKO_03249 (120 aa).

Belongs to the UPF0231 family.

This chain is UPF0231 protein CKO_03249, found in Citrobacter koseri (strain ATCC BAA-895 / CDC 4225-83 / SGSC4696).